A 207-amino-acid polypeptide reads, in one-letter code: Probable mediator of RNA polymerase II transcription subunit 19b (207 aa).

The interval Asp99–Met207 is disordered. Basic residues predominate over residues Asp127–Asp152. Over residues Arg153 to Lys167 the composition is skewed to basic and acidic residues. Basic residues predominate over residues Glu168–Asn179.

The protein belongs to the plant Mediator complex subunit 19 family. Component of the Mediator complex.

The protein localises to the nucleus. Its function is as follows. Component of the Mediator complex, a coactivator involved in the regulated transcription of nearly all RNA polymerase II-dependent genes. Mediator functions as a bridge to convey information from gene-specific regulatory proteins to the basal RNA polymerase II transcription machinery. The Mediator complex, having a compact conformation in its free form, is recruited to promoters by direct interactions with regulatory proteins and serves for the assembly of a functional preinitiation complex with RNA polymerase II and the general transcription factors. The sequence is that of Probable mediator of RNA polymerase II transcription subunit 19b (MED19B) from Arabidopsis thaliana (Mouse-ear cress).